Consider the following 175-residue polypeptide: Peptide deformylase (175 aa).

Fe cation contacts are provided by Cys92 and His134. Glu135 is an active-site residue. Residue His138 participates in Fe cation binding.

This sequence belongs to the polypeptide deformylase family. Fe(2+) is required as a cofactor.

The catalysed reaction is N-terminal N-formyl-L-methionyl-[peptide] + H2O = N-terminal L-methionyl-[peptide] + formate. Functionally, removes the formyl group from the N-terminal Met of newly synthesized proteins. Requires at least a dipeptide for an efficient rate of reaction. N-terminal L-methionine is a prerequisite for activity but the enzyme has broad specificity at other positions. The protein is Peptide deformylase of Blochmanniella floridana.